Here is a 184-residue protein sequence, read N- to C-terminus: Phosphodiesterase YfcE (184 aa).

Positions 9, 11, 37, 73, 105, 127, and 129 each coordinate Mn(2+).

Belongs to the metallophosphoesterase superfamily. YfcE family. The cofactor is Mn(2+).

Shows phosphodiesterase activity. The sequence is that of Phosphodiesterase YfcE (yfcE) from Escherichia coli O157:H7.